Consider the following 726-residue polypeptide: Disintegrin and metalloproteinase domain-containing protein 20 (726 aa).

A signal peptide spans 1–31 (MAVGEPLVHIRVTLLLLWFGMFLSISGHSQA). The propeptide occupies 32–206 (RPSQYFTSPE…SSFVGWWTHQ (175 aa)). Residues 171–178 (MRCGLTEE) carry the Cysteine switch motif. Zn(2+) is bound at residue cysteine 173. N-linked (GlcNAc...) asparagine glycans are attached at residues asparagine 191 and asparagine 226. The Peptidase M12B domain maps to 207–400 (RFVELVVVVD…SGLCIQPPPY (194 aa)). Topologically, residues 207 to 693 (RFVELVVVVD…GLNVMGKLRY (487 aa)) are extracellular. 3 cysteine pairs are disulfide-bonded: cysteine 317/cysteine 394, cysteine 357/cysteine 379, and cysteine 359/cysteine 364. Histidine 342 lines the Zn(2+) pocket. Residue glutamate 343 is part of the active site. Positions 346 and 352 each coordinate Zn(2+). N-linked (GlcNAc...) asparagine glycosylation is found at asparagine 378, asparagine 438, asparagine 479, and asparagine 587. The 87-residue stretch at 407–493 (LKYCGNLVVE…QCPDDVYVQD (87 aa)) folds into the Disintegrin domain. The cysteines at positions 465 and 485 are disulfide-linked. Disulfide bonds link cysteine 635–cysteine 646, cysteine 640–cysteine 652, and cysteine 654–cysteine 663. Residues 635-663 (CQPKTCNMRGICNNKQHCHCNHEWAPPYC) form the EGF-like domain. Residues 694–714 (LSLLCLLPLVAFLLFCLHVLF) traverse the membrane as a helical segment. Over 715 to 726 (KKRTKSKEDEEG) the chain is Cytoplasmic.

The cofactor is Zn(2+). Post-translationally, has no obvious cleavage site for furin endopeptidase, suggesting that the proteolytic processing is regulated. Testis specific.

It is found in the membrane. May be involved in sperm maturation and/or fertilization. This is Disintegrin and metalloproteinase domain-containing protein 20 (ADAM20) from Homo sapiens (Human).